Here is a 206-residue protein sequence, read N- to C-terminus: Enterobactin synthase component D (206 aa).

Positions 107, 109, and 152 each coordinate Mg(2+).

Belongs to the P-Pant transferase superfamily. EntD family. In terms of assembly, entB, EntD, EntE, and EntF form a multienzyme complex called enterobactin synthase. It depends on Mg(2+) as a cofactor.

It is found in the membrane. The catalysed reaction is apo-[aryl-carrier protein] + CoA = holo-[aryl-carrier protein] + adenosine 3',5'-bisphosphate + H(+). The enzyme catalyses apo-[peptidyl-carrier protein] + CoA = holo-[peptidyl-carrier protein] + adenosine 3',5'-bisphosphate + H(+). Its pathway is siderophore biosynthesis; enterobactin biosynthesis. In terms of biological role, involved in the biosynthesis of the siderophore enterobactin (enterochelin), which is a macrocyclic trimeric lactone of N-(2,3-dihydroxybenzoyl)-serine. The serine trilactone serves as a scaffolding for the three catechol functionalities that provide hexadentate coordination for the tightly ligated iron(2+) atoms. Plays an essential role in the assembly of the enterobactin by catalyzing the transfer of the 4'-phosphopantetheine (Ppant) moiety from coenzyme A to the apo-domains of both EntB (ArCP domain) and EntF (PCP domain) to yield their holo-forms which make them competent for the activation of 2,3-dihydroxybenzoate (DHB) and L-serine, respectively. The polypeptide is Enterobactin synthase component D (Escherichia coli (strain K12)).